A 105-amino-acid polypeptide reads, in one-letter code: Large ribosomal subunit protein uL24 (105 aa).

It belongs to the universal ribosomal protein uL24 family. In terms of assembly, part of the 50S ribosomal subunit.

In terms of biological role, one of two assembly initiator proteins, it binds directly to the 5'-end of the 23S rRNA, where it nucleates assembly of the 50S subunit. Its function is as follows. One of the proteins that surrounds the polypeptide exit tunnel on the outside of the subunit. This Nitrosococcus oceani (strain ATCC 19707 / BCRC 17464 / JCM 30415 / NCIMB 11848 / C-107) protein is Large ribosomal subunit protein uL24.